Reading from the N-terminus, the 584-residue chain is Dihydroxyacetone kinase 1 (584 aa).

An N-acetylserine modification is found at serine 2. Phosphoserine occurs at positions 2 and 5. Positions 7 to 353 constitute a DhaK domain; sequence EVTDPVNSSL…LNAFTNAPGW (347 aa). Residues 51–54, lysine 103, and aspartate 108 contribute to the substrate site; that span reads GSGH. Histidine 220 (tele-hemiaminal-histidine intermediate) is an active-site residue. Residue serine 365 is modified to Phosphoserine. One can recognise a DhaL domain in the interval 386–582; that stretch reads DKFAEWMKSG…LCEFLKGVQS (197 aa). Residues 415 to 418 and 459 to 460 contribute to the ATP site; these read DGDC and TS. Serine 512 carries the post-translational modification Phosphoserine. ATP contacts are provided by residues 514–515 and 567–569; these read TM and DPG.

It belongs to the dihydroxyacetone kinase (DAK) family.

The enzyme catalyses dihydroxyacetone + ATP = dihydroxyacetone phosphate + ADP + H(+). It carries out the reaction D-glyceraldehyde + ATP = D-glyceraldehyde 3-phosphate + ADP + H(+). The protein operates within polyol metabolism; glycerol fermentation; glycerone phosphate from glycerol (oxidative route): step 2/2. Catalyzes both the phosphorylation of dihydroxyacetone and of glyceraldehyde. In Saccharomyces cerevisiae (strain ATCC 204508 / S288c) (Baker's yeast), this protein is Dihydroxyacetone kinase 1 (DAK1).